A 390-amino-acid polypeptide reads, in one-letter code: Heat stress transcription factor B-2b (390 aa).

The segment at 165-212 is disordered; it reads TRDGSPVLSGEEQVISSSSSPEPPLVLPQAPSGSGSGGVASGDVGDEN. Positions 206 to 237 form a coiled coil; sequence GDVGDENERLRRENAQLARELSQMRKLCNNIL. The segment at 215–244 is hydrophobic repeat HR-A/B; sequence LRRENAQLARELSQMRKLCNNILLLMSKYA. Residues 318 to 322 carry the Nuclear localization signal motif; sequence RKRMR. The interval 322-363 is disordered; it reads RHDGGGDDDHAATVKAEPMDGRPHGKDEQSAETQAWPIYRPR. The segment covering 323-350 has biased composition (basic and acidic residues); the sequence is HDGGGDDDHAATVKAEPMDGRPHGKDEQ.

Belongs to the HSF family. Class B subfamily. In terms of assembly, homotrimer. Exhibits temperature-dependent phosphorylation.

Its subcellular location is the nucleus. Transcriptional regulator that specifically binds DNA of heat shock promoter elements (HSE). This chain is Heat stress transcription factor B-2b (HSFB2B), found in Oryza sativa subsp. japonica (Rice).